A 156-amino-acid chain; its full sequence is ATP synthase subunit b (156 aa).

A helical transmembrane segment spans residues 11 to 31 (AIAFVIFVWFCMKYVWPPLMA).

This sequence belongs to the ATPase B chain family. As to quaternary structure, F-type ATPases have 2 components, F(1) - the catalytic core - and F(0) - the membrane proton channel. F(1) has five subunits: alpha(3), beta(3), gamma(1), delta(1), epsilon(1). F(0) has three main subunits: a(1), b(2) and c(10-14). The alpha and beta chains form an alternating ring which encloses part of the gamma chain. F(1) is attached to F(0) by a central stalk formed by the gamma and epsilon chains, while a peripheral stalk is formed by the delta and b chains.

Its subcellular location is the cell inner membrane. F(1)F(0) ATP synthase produces ATP from ADP in the presence of a proton or sodium gradient. F-type ATPases consist of two structural domains, F(1) containing the extramembraneous catalytic core and F(0) containing the membrane proton channel, linked together by a central stalk and a peripheral stalk. During catalysis, ATP synthesis in the catalytic domain of F(1) is coupled via a rotary mechanism of the central stalk subunits to proton translocation. Its function is as follows. Component of the F(0) channel, it forms part of the peripheral stalk, linking F(1) to F(0). This chain is ATP synthase subunit b, found in Klebsiella pneumoniae (strain 342).